A 186-amino-acid polypeptide reads, in one-letter code: RIO-type serine/threonine-protein kinase Rio1 (186 aa).

ATP is bound at residue K15. Residue D124 is the Proton acceptor of the active site. N129 and D140 together coordinate Mg(2+). The active-site 4-aspartylphosphate intermediate is D140.

The protein belongs to the protein kinase superfamily. RIO-type Ser/Thr kinase family.

It catalyses the reaction L-seryl-[protein] + ATP = O-phospho-L-seryl-[protein] + ADP + H(+). It carries out the reaction L-threonyl-[protein] + ATP = O-phospho-L-threonyl-[protein] + ADP + H(+). The catalysed reaction is ATP + H2O = ADP + phosphate + H(+). In terms of biological role, despite the protein kinase domain is proposed to act predominantly as an ATPase. The chain is RIO-type serine/threonine-protein kinase Rio1 (rio1) from Thermoplasma acidophilum (strain ATCC 25905 / DSM 1728 / JCM 9062 / NBRC 15155 / AMRC-C165).